Consider the following 260-residue polypeptide: Large ribosomal subunit protein uL2y (260 aa).

The segment at 227-248 (RRDKSAGAKVGQIAARRTGRRR) is disordered.

It belongs to the universal ribosomal protein uL2 family.

The sequence is that of Large ribosomal subunit protein uL2y (RPL8B) from Arabidopsis thaliana (Mouse-ear cress).